Consider the following 69-residue polypeptide: Calcium-binding protein (69 aa).

2 consecutive EF-hand domains span residues 2-37 (VNRTEAAQLLKHLDRDKSGKISSQELMEFLHTVNCP) and 38-69 (FKKEQVEKFIKQHDKDGDGQLNTDELLDVLCS). Ca(2+)-binding residues include Asp15, Asp17, Ser19, Lys21, Glu26, Asp51, Asp53, Asp55, Gln57, and Glu62.

The polypeptide is Calcium-binding protein (Schistosoma mansoni (Blood fluke)).